The chain runs to 337 residues: Phenylalanine--tRNA ligase alpha subunit (337 aa).

Glu258 lines the Mg(2+) pocket.

It belongs to the class-II aminoacyl-tRNA synthetase family. Phe-tRNA synthetase alpha subunit type 1 subfamily. In terms of assembly, tetramer of two alpha and two beta subunits. The cofactor is Mg(2+).

The protein resides in the cytoplasm. It catalyses the reaction tRNA(Phe) + L-phenylalanine + ATP = L-phenylalanyl-tRNA(Phe) + AMP + diphosphate + H(+). The chain is Phenylalanine--tRNA ligase alpha subunit from Burkholderia cenocepacia (strain ATCC BAA-245 / DSM 16553 / LMG 16656 / NCTC 13227 / J2315 / CF5610) (Burkholderia cepacia (strain J2315)).